The chain runs to 209 residues: Small ribosomal subunit protein uS4 (209 aa).

Cys-9, Cys-12, Cys-26, and Cys-31 together coordinate Zn(2+). Residues 9–31 (CKLCRREGMKLYLKGERCYTDKC) form a C4-type zinc finger. The S4 RNA-binding domain occupies 98–161 (ARLDNVVYRM…RDLEVIKKAI (64 aa)).

The protein belongs to the universal ribosomal protein uS4 family. As to quaternary structure, part of the 30S ribosomal subunit. Contacts protein S5. The interaction surface between S4 and S5 is involved in control of translational fidelity. The cofactor is Zn(2+).

In terms of biological role, one of the primary rRNA binding proteins, it binds directly to 16S rRNA where it nucleates assembly of the body of the 30S subunit. With S5 and S12 plays an important role in translational accuracy. The chain is Small ribosomal subunit protein uS4 (rpsD) from Thermotoga maritima (strain ATCC 43589 / DSM 3109 / JCM 10099 / NBRC 100826 / MSB8).